The chain runs to 57 residues: UPF0391 membrane protein RPA3505 (57 aa).

The next 2 membrane-spanning stretches (helical) occupy residues 4 to 24 (WVVT…GGIA) and 30 to 50 (IAKI…VISI).

Belongs to the UPF0391 family.

The protein resides in the cell membrane. This chain is UPF0391 membrane protein RPA3505, found in Rhodopseudomonas palustris (strain ATCC BAA-98 / CGA009).